The chain runs to 186 residues: ATP synthase subunit b, chloroplastic (186 aa).

The chain crosses the membrane as a helical span at residues 26–44 (ILETNLINLGVVIGTLLYF).

This sequence belongs to the ATPase B chain family. As to quaternary structure, F-type ATPases have 2 components, F(1) - the catalytic core - and F(0) - the membrane proton channel. F(1) has five subunits: alpha(3), beta(3), gamma(1), delta(1), epsilon(1). F(0) has four main subunits: a(1), b(1), b'(1) and c(10-14). The alpha and beta chains form an alternating ring which encloses part of the gamma chain. F(1) is attached to F(0) by a central stalk formed by the gamma and epsilon chains, while a peripheral stalk is formed by the delta, b and b' chains.

It is found in the plastid. The protein resides in the chloroplast thylakoid membrane. In terms of biological role, f(1)F(0) ATP synthase produces ATP from ADP in the presence of a proton or sodium gradient. F-type ATPases consist of two structural domains, F(1) containing the extramembraneous catalytic core and F(0) containing the membrane proton channel, linked together by a central stalk and a peripheral stalk. During catalysis, ATP synthesis in the catalytic domain of F(1) is coupled via a rotary mechanism of the central stalk subunits to proton translocation. Functionally, component of the F(0) channel, it forms part of the peripheral stalk, linking F(1) to F(0). This is ATP synthase subunit b, chloroplastic from Chara vulgaris (Common stonewort).